Here is a 190-residue protein sequence, read N- to C-terminus: Heme-binding protein 1 (190 aa).

It belongs to the HEBP family. Monomer. As to expression, ubiquitously expressed. Extremely abundant in liver.

It is found in the cytoplasm. Functionally, may bind free porphyrinogens that may be present in the cell and thus facilitate removal of these potentially toxic compound. Binds with a high affinity to one molecule of heme or porphyrins. It binds metalloporphyrins, free porphyrins and N-methylprotoporphyrin with similar affinities. In Mus musculus (Mouse), this protein is Heme-binding protein 1 (Hebp1).